Reading from the N-terminus, the 226-residue chain is UPF0173 metal-dependent hydrolase Tpet_1587 (226 aa).

It belongs to the UPF0173 family.

The sequence is that of UPF0173 metal-dependent hydrolase Tpet_1587 from Thermotoga petrophila (strain ATCC BAA-488 / DSM 13995 / JCM 10881 / RKU-1).